We begin with the raw amino-acid sequence, 342 residues long: L-threonine 3-dehydrogenase (342 aa).

Cys38 provides a ligand contact to Zn(2+). Active-site charge relay system residues include Thr40 and His43. Residues His63, Glu64, Cys93, Cys96, Cys99, and Cys107 each contribute to the Zn(2+) site. NAD(+) contacts are provided by residues Val175, Asp195, Arg200, 262–264 (LGI), and 286–287 (IY).

Belongs to the zinc-containing alcohol dehydrogenase family. As to quaternary structure, homotetramer. Requires Zn(2+) as cofactor.

It is found in the cytoplasm. It catalyses the reaction L-threonine + NAD(+) = (2S)-2-amino-3-oxobutanoate + NADH + H(+). Its pathway is amino-acid degradation; L-threonine degradation via oxydo-reductase pathway; glycine from L-threonine: step 1/2. Functionally, catalyzes the NAD(+)-dependent oxidation of L-threonine to 2-amino-3-ketobutyrate. The sequence is that of L-threonine 3-dehydrogenase from Coxiella burnetii (strain Dugway 5J108-111).